The chain runs to 390 residues: Methylthioribose-1-phosphate isomerase (390 aa).

The Proton donor role is filled by Asp263.

The protein belongs to the eIF-2B alpha/beta/delta subunits family. MtnA subfamily.

Its subcellular location is the cytoplasm. The protein resides in the nucleus. The enzyme catalyses 5-(methylsulfanyl)-alpha-D-ribose 1-phosphate = 5-(methylsulfanyl)-D-ribulose 1-phosphate. The protein operates within amino-acid biosynthesis; L-methionine biosynthesis via salvage pathway; L-methionine from S-methyl-5-thio-alpha-D-ribose 1-phosphate: step 1/6. In terms of biological role, catalyzes the interconversion of methylthioribose-1-phosphate (MTR-1-P) into methylthioribulose-1-phosphate (MTRu-1-P). The protein is Methylthioribose-1-phosphate isomerase of Meyerozyma guilliermondii (strain ATCC 6260 / CBS 566 / DSM 6381 / JCM 1539 / NBRC 10279 / NRRL Y-324) (Yeast).